A 287-amino-acid polypeptide reads, in one-letter code: Pyridoxal kinase PdxY (287 aa).

Substrate contacts are provided by residues S9 and 44 to 45 (MQ). Residues D111, A142, E147, and K180 each contribute to the ATP site. D221 is a binding site for substrate.

It belongs to the pyridoxine kinase family. PdxY subfamily. In terms of assembly, homodimer. It depends on Mg(2+) as a cofactor.

The enzyme catalyses pyridoxal + ATP = pyridoxal 5'-phosphate + ADP + H(+). Its pathway is cofactor metabolism; pyridoxal 5'-phosphate salvage; pyridoxal 5'-phosphate from pyridoxal: step 1/1. Pyridoxal kinase involved in the salvage pathway of pyridoxal 5'-phosphate (PLP). Catalyzes the phosphorylation of pyridoxal to PLP. The polypeptide is Pyridoxal kinase PdxY (Burkholderia mallei (strain ATCC 23344)).